The primary structure comprises 398 residues: 1-deoxy-D-xylulose 5-phosphate reductoisomerase (398 aa).

NADPH contacts are provided by T11, G12, S13, I14, R38, N39, and N125. K126 contributes to the 1-deoxy-D-xylulose 5-phosphate binding site. E127 is a binding site for NADPH. A Mn(2+)-binding site is contributed by D151. Residues S152, E153, S179, and H202 each coordinate 1-deoxy-D-xylulose 5-phosphate. E153 is a Mn(2+) binding site. Residue G208 coordinates NADPH. Residues S215, N220, K221, and E224 each contribute to the 1-deoxy-D-xylulose 5-phosphate site. E224 is a binding site for Mn(2+).

The protein belongs to the DXR family. Mg(2+) is required as a cofactor. Requires Mn(2+) as cofactor.

It carries out the reaction 2-C-methyl-D-erythritol 4-phosphate + NADP(+) = 1-deoxy-D-xylulose 5-phosphate + NADPH + H(+). It participates in isoprenoid biosynthesis; isopentenyl diphosphate biosynthesis via DXP pathway; isopentenyl diphosphate from 1-deoxy-D-xylulose 5-phosphate: step 1/6. Its function is as follows. Catalyzes the NADPH-dependent rearrangement and reduction of 1-deoxy-D-xylulose-5-phosphate (DXP) to 2-C-methyl-D-erythritol 4-phosphate (MEP). The protein is 1-deoxy-D-xylulose 5-phosphate reductoisomerase of Burkholderia vietnamiensis (strain G4 / LMG 22486) (Burkholderia cepacia (strain R1808)).